Here is a 380-residue protein sequence, read N- to C-terminus: NF-kappa-B inhibitor-like protein 1 (380 aa).

The segment at 1 to 34 (MSNPSPQVPEGEASTSVCRPKSSMASTSRRQRRE) is disordered. Polar residues predominate over residues 13–28 (ASTSVCRPKSSMASTS). ANK repeat units lie at residues 64–93 (GQPP…DPAH) and 97–133 (HGDT…IKNK). Disordered stretches follow at residues 131–167 (KNKD…EWRQ) and 185–293 (EDDA…RGSL). Serine 150 carries the post-translational modification Phosphoserine. The segment covering 150-159 (SAEEEEEDEA) has biased composition (acidic residues). 2 stretches are compositionally biased toward basic and acidic residues: residues 204 to 221 (RMAR…ETEG) and 236 to 272 (RQQE…RDPV).

As to quaternary structure, interacts with CACTIN (via N-terminal domain); the interaction occurs in a pro-inflammatory-independent manner.

It localises to the nucleus. Its function is as follows. Involved in the regulation of innate immune response. Acts as negative regulator of Toll-like receptor and interferon-regulatory factor (IRF) signaling pathways. Contributes to the negative regulation of transcriptional activation of NF-kappa-B target genes in response to endogenous pro-inflammatory stimuli. The sequence is that of NF-kappa-B inhibitor-like protein 1 (NFKBIL1) from Sus scrofa (Pig).